The primary structure comprises 252 residues: Ribosomal RNA small subunit methyltransferase J (252 aa).

S-adenosyl-L-methionine is bound by residues 101–102 (RD), 117–118 (ER), 153–154 (SS), and aspartate 171.

This sequence belongs to the methyltransferase superfamily. RsmJ family.

The protein resides in the cytoplasm. The catalysed reaction is guanosine(1516) in 16S rRNA + S-adenosyl-L-methionine = N(2)-methylguanosine(1516) in 16S rRNA + S-adenosyl-L-homocysteine + H(+). In terms of biological role, specifically methylates the guanosine in position 1516 of 16S rRNA. This Salmonella typhi protein is Ribosomal RNA small subunit methyltransferase J.